We begin with the raw amino-acid sequence, 239 residues long: Ribosomal RNA small subunit methyltransferase G (239 aa).

S-adenosyl-L-methionine contacts are provided by residues glycine 79, phenylalanine 84, 130–131 (AE), and arginine 149.

Belongs to the methyltransferase superfamily. RNA methyltransferase RsmG family.

The protein resides in the cytoplasm. In terms of biological role, specifically methylates the N7 position of a guanine in 16S rRNA. The sequence is that of Ribosomal RNA small subunit methyltransferase G from Lactobacillus delbrueckii subsp. bulgaricus (strain ATCC 11842 / DSM 20081 / BCRC 10696 / JCM 1002 / NBRC 13953 / NCIMB 11778 / NCTC 12712 / WDCM 00102 / Lb 14).